The chain runs to 218 residues: Dual specificity protein phosphatase TpbA (218 aa).

Positions 1–28 (MHRSPLAWLRLLLAAVLGAFLLGGPLHA) are cleaved as a signal peptide. The 145-residue stretch at 44–188 (DPSINLYRMS…YVRGADVDGL (145 aa)) folds into the Tyrosine-protein phosphatase domain. The active-site Proton donor/acceptor is Asp105. Cys132 functions as the Phosphocysteine intermediate in the catalytic mechanism.

Belongs to the protein-tyrosine phosphatase family. Monomer in solution.

The protein resides in the periplasm. The enzyme catalyses O-phospho-L-tyrosyl-[protein] + H2O = L-tyrosyl-[protein] + phosphate. It carries out the reaction O-phospho-L-threonyl-[protein] + H2O = L-threonyl-[protein] + phosphate. It catalyses the reaction O-phospho-L-seryl-[protein] + H2O = L-seryl-[protein] + phosphate. With respect to regulation, the phosphatase activity is completely inhibited by trisodium orthovanadate, a tyrosine phosphatase specific inhibitor. Phosphatase that regulates diverse phenotypes in P.aeruginosa via regulation of the concentration of cellular c-di-GMP. Acts by dephosphorylating the membrane-anchored diguanylate cyclase TpbB at tyrosine and serine/threonine sites, leading to inactivation of TpbB and reduced c-di-GMP production. The reduced cellular c-di-GMP concentration leads to reduced adhesin expression, reduced extracellular polysaccharide (EPS) production, pellicule production, cell aggregation and biofilm formation, and enhanced swimming and swarming. It affects colony morphology and controls rugose colony formation. TpbA also acts as a positive regulator of extracellular DNA (eDNA, a major component of the biofilm matrix) and cell lysis by reducing c-di-GMP concentrations. In vitro shows phosphatase activity toward p-nitrophenyl phosphate (pNPP), tyrosine phosphopeptides and a threonine phosphopeptide. Does not have phosphodiesterases (PDE) activity, and cannot degrade c-di-GMP. This is Dual specificity protein phosphatase TpbA from Pseudomonas aeruginosa (strain UCBPP-PA14).